Reading from the N-terminus, the 192-residue chain is MGNILLLDNIDSFTYNLVDQLRSNFHQVFVYRNTVRKNIILKKLSKMINPILILSPGPGNPDNAGCMPQLLMELKGKLPIIGICLGHQAIVKMYGGHVGYSGEILHGQASLINHDNKAMFLGMSNPLPVARYHSLICSNIPNMLVVNAHFNNMVMAVRNDYEKICGFQFHPESILTTRGTEFLQRVIQWTKI.

The Glutamine amidotransferase type-1 domain occupies 3 to 192; it reads NILLLDNIDS…LQRVIQWTKI (190 aa). Residue 57–59 participates in L-glutamine binding; sequence GPG. The Nucleophile; for GATase activity role is filled by Cys-84. Residues Gln-88 and 134-135 each bind L-glutamine; that span reads SL. Catalysis depends on for GATase activity residues His-170 and Glu-172.

In terms of assembly, heterotetramer consisting of two non-identical subunits: a beta subunit (TrpG) and a large alpha subunit (TrpE).

The catalysed reaction is chorismate + L-glutamine = anthranilate + pyruvate + L-glutamate + H(+). It participates in amino-acid biosynthesis; L-tryptophan biosynthesis; L-tryptophan from chorismate: step 1/5. In terms of biological role, part of a heterotetrameric complex that catalyzes the two-step biosynthesis of anthranilate, an intermediate in the biosynthesis of L-tryptophan. In the first step, the glutamine-binding beta subunit (TrpG) of anthranilate synthase (AS) provides the glutamine amidotransferase activity which generates ammonia as a substrate that, along with chorismate, is used in the second step, catalyzed by the large alpha subunit of AS (TrpE) to produce anthranilate. In the absence of TrpG, TrpE can synthesize anthranilate directly from chorismate and high concentrations of ammonia. The chain is Anthranilate synthase component 2 (trpG) from Buchnera aphidicola subsp. Baizongia pistaciae (strain Bp).